Reading from the N-terminus, the 321-residue chain is Malate dehydrogenase (321 aa).

NAD(+) contacts are provided by residues 13 to 18 (GAGNIG) and Asp-38. Residues Arg-87 and Arg-93 each coordinate substrate. NAD(+) is bound by residues Asn-100 and 123–125 (VTN). Asn-125 and Arg-156 together coordinate substrate. His-180 acts as the Proton acceptor in catalysis.

It belongs to the LDH/MDH superfamily. MDH type 3 family.

The enzyme catalyses (S)-malate + NAD(+) = oxaloacetate + NADH + H(+). In terms of biological role, catalyzes the reversible oxidation of malate to oxaloacetate. In Anaplasma phagocytophilum (strain HZ), this protein is Malate dehydrogenase.